Here is a 396-residue protein sequence, read N- to C-terminus: Chaperone protein DnaJ 1 (396 aa).

In terms of domain architecture, J spans 10–75 (DYYKVLGVPK…KKRKEYDEAR (66 aa)). A compositionally biased stretch (gly residues) spans 127-137 (LFNRGGAGPGT). Positions 127-149 (LFNRGGAGPGTGTRTQPRRGQDI) are disordered. The CR-type zinc finger occupies 163-241 (GATVPLRMSS…CKGSGRAKSS (79 aa)). The Zn(2+) site is built by Cys-176, Cys-179, Cys-192, Cys-195, Cys-215, Cys-218, Cys-229, and Cys-232. 4 CXXCXGXG motif repeats span residues 176–183 (CKACSGTG), 192–199 (CPTCVGTG), 215–222 (CPDCKGRG), and 229–236 (CEICKGSG).

Belongs to the DnaJ family. In terms of assembly, homodimer. Requires Zn(2+) as cofactor.

Its subcellular location is the cytoplasm. In terms of biological role, participates actively in the response to hyperosmotic and heat shock by preventing the aggregation of stress-denatured proteins and by disaggregating proteins, also in an autonomous, DnaK-independent fashion. Unfolded proteins bind initially to DnaJ; upon interaction with the DnaJ-bound protein, DnaK hydrolyzes its bound ATP, resulting in the formation of a stable complex. GrpE releases ADP from DnaK; ATP binding to DnaK triggers the release of the substrate protein, thus completing the reaction cycle. Several rounds of ATP-dependent interactions between DnaJ, DnaK and GrpE are required for fully efficient folding. Also involved, together with DnaK and GrpE, in the DNA replication of plasmids through activation of initiation proteins. The polypeptide is Chaperone protein DnaJ 1 (Streptomyces avermitilis (strain ATCC 31267 / DSM 46492 / JCM 5070 / NBRC 14893 / NCIMB 12804 / NRRL 8165 / MA-4680)).